Here is a 775-residue protein sequence, read N- to C-terminus: ATP-dependent 6-phosphofructokinase 2 (775 aa).

Residues 1-390 (MTNTILDTYS…YHSAYRHLNT (390 aa)) form an N-terminal catalytic PFK domain 1 region. Residues Gly25, 88 to 89 (RC), and 118 to 121 (GDGS) each bind ATP. Asp119 is a Mg(2+) binding site. Substrate-binding positions include 164 to 166 (SID), Arg201, 208 to 210 (MGR), Glu264, Arg292, and 298 to 301 (HIQR). Asp166 functions as the Proton acceptor in the catalytic mechanism. Positions 391–404 (SDHPKMVLPEDKRM) are interdomain linker. Residues 405–775 (RVAIIHVGAP…GRSSLYAIPN (371 aa)) are C-terminal regulatory PFK domain 2. Beta-D-fructose 2,6-bisphosphate is bound by residues 537–541 (SMSNN), 582–584 (QGA), Asp640, and 672–675 (HFQQ).

Belongs to the phosphofructokinase type A (PFKA) family. ATP-dependent PFK group I subfamily. Eukaryotic two domain clade 'E' sub-subfamily. In terms of assembly, homotetramer. Mg(2+) serves as cofactor.

It localises to the cytoplasm. The enzyme catalyses beta-D-fructose 6-phosphate + ATP = beta-D-fructose 1,6-bisphosphate + ADP + H(+). The protein operates within carbohydrate degradation; glycolysis; D-glyceraldehyde 3-phosphate and glycerone phosphate from D-glucose: step 3/4. Allosterically activated by ADP, AMP, or fructose 2,6-bisphosphate, and allosterically inhibited by ATP or citrate. Its function is as follows. Catalyzes the phosphorylation of D-fructose 6-phosphate to fructose 1,6-bisphosphate by ATP, the first committing step of glycolysis. In Aspergillus oryzae (strain ATCC 42149 / RIB 40) (Yellow koji mold), this protein is ATP-dependent 6-phosphofructokinase 2 (pfkB).